Consider the following 295-residue polypeptide: MLILPIVKGEYKKDYNLKHLTWFKVGGNAEIFFKPLDSEDLKSFLIQNKQKLPIKTFGAGSNIIIRDGGIEGVVIKLGQNFSNIEFIDNHLIVGSSCLNYNLAKFCQANAISGFEFLVGIPGTIGGGVAMNAGAYGSEFKDIVVQIEAIDFAGNFLTFTNEAIGFKYRSNNLPKNLIILKVVFKINKGDSENILLRMNEINNARSSTQPIKERTGGSTFANPEGHKSWELIDKAGLRGYRIGGASMSELHCNFMINNGDATAKDLEDLGDFVRQKVCEDSGVKLEWEIKRIGRHP.

An FAD-binding PCMH-type domain is found at 24-188 (KVGGNAEIFF…LKVVFKINKG (165 aa)). The active site involves arginine 168. The active-site Proton donor is serine 217. Residue glutamate 287 is part of the active site.

This sequence belongs to the MurB family. FAD serves as cofactor.

The protein localises to the cytoplasm. The catalysed reaction is UDP-N-acetyl-alpha-D-muramate + NADP(+) = UDP-N-acetyl-3-O-(1-carboxyvinyl)-alpha-D-glucosamine + NADPH + H(+). It functions in the pathway cell wall biogenesis; peptidoglycan biosynthesis. In terms of biological role, cell wall formation. This is UDP-N-acetylenolpyruvoylglucosamine reductase from Rickettsia peacockii (strain Rustic).